A 241-amino-acid polypeptide reads, in one-letter code: Trypsin-1 (241 aa).

Residues 1–13 (MKSLIFVLLLGAV) form the signal peptide. The propeptide at 14–19 (FAEEDK) is activation peptide. The region spanning 20-239 (IVGGYECTKH…LSGWVRDTMA (220 aa)) is the Peptidase S1 domain. 6 disulfide bridges follow: Cys26-Cys155, Cys44-Cys60, Cys128-Cys228, Cys135-Cys201, Cys166-Cys180, and Cys191-Cys215. Catalysis depends on charge relay system residues His59 and Asp103. Residue Ser195 is the Charge relay system of the active site.

Belongs to the peptidase S1 family.

It is found in the secreted. It localises to the extracellular space. The enzyme catalyses Preferential cleavage: Arg-|-Xaa, Lys-|-Xaa.. This Gadus morhua (Atlantic cod) protein is Trypsin-1.